The following is a 476-amino-acid chain: Aspartyl/glutamyl-tRNA(Asn/Gln) amidotransferase subunit B (476 aa).

The protein belongs to the GatB/GatE family. GatB subfamily. As to quaternary structure, heterotrimer of A, B and C subunits.

The enzyme catalyses L-glutamyl-tRNA(Gln) + L-glutamine + ATP + H2O = L-glutaminyl-tRNA(Gln) + L-glutamate + ADP + phosphate + H(+). It catalyses the reaction L-aspartyl-tRNA(Asn) + L-glutamine + ATP + H2O = L-asparaginyl-tRNA(Asn) + L-glutamate + ADP + phosphate + 2 H(+). Functionally, allows the formation of correctly charged Asn-tRNA(Asn) or Gln-tRNA(Gln) through the transamidation of misacylated Asp-tRNA(Asn) or Glu-tRNA(Gln) in organisms which lack either or both of asparaginyl-tRNA or glutaminyl-tRNA synthetases. The reaction takes place in the presence of glutamine and ATP through an activated phospho-Asp-tRNA(Asn) or phospho-Glu-tRNA(Gln). The chain is Aspartyl/glutamyl-tRNA(Asn/Gln) amidotransferase subunit B from Lactobacillus helveticus (strain DPC 4571).